Reading from the N-terminus, the 164-residue chain is Phosphopantetheine adenylyltransferase (164 aa).

Residue S10 coordinates substrate. ATP-binding positions include 10–11 (SF) and H18. K42, L74, and R88 together coordinate substrate. Residues 89 to 91 (GLR), E99, and 124 to 130 (YSFLSSS) each bind ATP.

Belongs to the bacterial CoaD family. In terms of assembly, homohexamer. It depends on Mg(2+) as a cofactor.

The protein resides in the cytoplasm. The catalysed reaction is (R)-4'-phosphopantetheine + ATP + H(+) = 3'-dephospho-CoA + diphosphate. It functions in the pathway cofactor biosynthesis; coenzyme A biosynthesis; CoA from (R)-pantothenate: step 4/5. Reversibly transfers an adenylyl group from ATP to 4'-phosphopantetheine, yielding dephospho-CoA (dPCoA) and pyrophosphate. In Exiguobacterium sibiricum (strain DSM 17290 / CCUG 55495 / CIP 109462 / JCM 13490 / 255-15), this protein is Phosphopantetheine adenylyltransferase.